Reading from the N-terminus, the 949-residue chain is L-fucokinase/L-fucose-1-P guanylyltransferase (949 aa).

The interval 25–191 (DWFCTSDPVG…DFMLQKPSLA (167 aa)) is fucose-1-phosphate guanylyltransferase. Positions 559 to 949 (LLRDGLLDGI…SDKGFQVSRS (391 aa)) are L-fucokinase.

The protein belongs to the GHMP kinase family. As to quaternary structure, homotetramer. Mn(2+) is required as a cofactor. Mg(2+) serves as cofactor.

It carries out the reaction L-fucose + ATP = beta-L-fucose 1-phosphate + ADP + H(+). The enzyme catalyses beta-L-fucose 1-phosphate + GTP + H(+) = GDP-beta-L-fucose + diphosphate. In terms of biological role, bifunctional enzyme involved in the salvage pathway of GDP-fucose synthesis. Catalyzes two successive reactions, the ATP-dependent phosphorylation of L-fucose to L-fucose 1-phosphate, and its guanylylation to GDP-L-fucose. GDP-fucose is an important fucose donor in the process of fucosylated oligosaccharides formation. The chain is L-fucokinase/L-fucose-1-P guanylyltransferase from Bacteroides fragilis.